The primary structure comprises 415 residues: Phosphoglycerate kinase (415 aa).

Substrate is bound by residues 24–26 (DLN), Arg39, 62–65 (HLGR), Arg121, and Arg161. ATP contacts are provided by residues Lys211, Gly307, Glu338, and 367–370 (GGDS).

The protein belongs to the phosphoglycerate kinase family. In terms of assembly, monomer.

It localises to the cytoplasm. The enzyme catalyses (2R)-3-phosphoglycerate + ATP = (2R)-3-phospho-glyceroyl phosphate + ADP. It functions in the pathway carbohydrate degradation; glycolysis; pyruvate from D-glyceraldehyde 3-phosphate: step 2/5. This chain is Phosphoglycerate kinase, found in Micrococcus luteus (strain ATCC 4698 / DSM 20030 / JCM 1464 / CCM 169 / CCUG 5858 / IAM 1056 / NBRC 3333 / NCIMB 9278 / NCTC 2665 / VKM Ac-2230) (Micrococcus lysodeikticus).